Consider the following 311-residue polypeptide: Methionyl-tRNA formyltransferase (311 aa).

(6S)-5,6,7,8-tetrahydrofolate is bound at residue 112–115; that stretch reads SLLP.

The protein belongs to the Fmt family.

It carries out the reaction L-methionyl-tRNA(fMet) + (6R)-10-formyltetrahydrofolate = N-formyl-L-methionyl-tRNA(fMet) + (6S)-5,6,7,8-tetrahydrofolate + H(+). In terms of biological role, attaches a formyl group to the free amino group of methionyl-tRNA(fMet). The formyl group appears to play a dual role in the initiator identity of N-formylmethionyl-tRNA by promoting its recognition by IF2 and preventing the misappropriation of this tRNA by the elongation apparatus. This is Methionyl-tRNA formyltransferase from Bartonella henselae (strain ATCC 49882 / DSM 28221 / CCUG 30454 / Houston 1) (Rochalimaea henselae).